Consider the following 3101-residue polypeptide: Probable polyketide synthase 32 (3101 aa).

The region spanning 27-465 (SGDVAVIGIG…GSNVCLILSE (439 aa)) is the Ketosynthase family 3 (KS3) domain. Active-site for beta-ketoacyl synthase activity residues include Cys-199, His-338, and His-388. Residues 664-697 (GVSADIIIGHSLGEVSSAYCSGMIDFETLCYLTY) are acyl/malonyl transferase. Catalysis depends on Ser-674, which acts as the For acyl/malonyl transferase activity. The tract at residues 965-1087 (GPSINNLGNN…GNFSLTKHNS (123 aa)) is N-terminal hotdog fold. A PKS/mFAS DH domain is found at 965 to 1287 (GPSINNLGNN…CTLVSLPNPE (323 aa)). His-999 acts as the Proton acceptor; for dehydratase activity in catalysis. A C-terminal hotdog fold region spans residues 1104-1287 (NFTSISKQDL…CTLVSLPNPE (184 aa)). Asp-1176 acts as the Proton donor; for dehydratase activity in catalysis. Residues 1209-1236 (KNGNNNDDDEESNNNNNNNNNNNNNNNN) form a disordered region. Positions 1221-1236 (NNNNNNNNNNNNNNNN) are enriched in low complexity. Residues 2550–2627 (DNNEIIRSTI…QSIEIIKSAN (78 aa)) enclose the Carrier domain. Position 2587 is an O-(pantetheine 4'-phosphoryl)serine (Ser-2587). Positions 2627-2648 (NNKNNKNNNNNNNNKTNKNNNN) are disordered.

It depends on pantetheine 4'-phosphate as a cofactor.

Its function is as follows. Probable polyketide synthase. The polypeptide is Probable polyketide synthase 32 (pks32) (Dictyostelium discoideum (Social amoeba)).